The chain runs to 97 residues: Large ribosomal subunit protein bL27 (97 aa).

Positions 1 to 12 (MLKMTLNNLQLF) are excised as a propeptide. Positions 13-37 (AHKKGGGSTSNGRDSQAKRLGAKAA) are disordered.

This sequence belongs to the bacterial ribosomal protein bL27 family. The N-terminus is cleaved by ribosomal processing cysteine protease Prp.

The polypeptide is Large ribosomal subunit protein bL27 (Streptococcus pneumoniae serotype 2 (strain D39 / NCTC 7466)).